The chain runs to 379 residues: UDP-4-amino-4-deoxy-L-arabinose--oxoglutarate aminotransferase (379 aa).

Residue Lys-182 is modified to N6-(pyridoxal phosphate)lysine.

Belongs to the DegT/DnrJ/EryC1 family. ArnB subfamily. Homodimer. The cofactor is pyridoxal 5'-phosphate.

The catalysed reaction is UDP-4-amino-4-deoxy-beta-L-arabinose + 2-oxoglutarate = UDP-beta-L-threo-pentopyranos-4-ulose + L-glutamate. It functions in the pathway nucleotide-sugar biosynthesis; UDP-4-deoxy-4-formamido-beta-L-arabinose biosynthesis; UDP-4-deoxy-4-formamido-beta-L-arabinose from UDP-alpha-D-glucuronate: step 2/3. The protein operates within bacterial outer membrane biogenesis; lipopolysaccharide biosynthesis. Functionally, catalyzes the conversion of UDP-4-keto-arabinose (UDP-Ara4O) to UDP-4-amino-4-deoxy-L-arabinose (UDP-L-Ara4N). The modified arabinose is attached to lipid A and is required for resistance to polymyxin and cationic antimicrobial peptides. The sequence is that of UDP-4-amino-4-deoxy-L-arabinose--oxoglutarate aminotransferase from Erwinia tasmaniensis (strain DSM 17950 / CFBP 7177 / CIP 109463 / NCPPB 4357 / Et1/99).